The following is a 223-amino-acid chain: MSKQIPTPYMWSYQPQSGRAAGASVDYSTRMNWLSAGPSMIGQVNDIRHTRNQILIRQALITETPRPVQNPPSWPASLLPQMTQPPTHLHLPRNEILEGRLTDAGMQLAGGGALAPRDLYALTLRGRGIQLNEDLPLSASTLRPDGIFQLGGGGRSSFNPTDAYLTLQNSSSLPRSGGIGSEQFVREFVPTVYINPFSGPPGTYPDQFIANYNILTDSVAGYD.

Phosphothreonine; by host is present on Thr64. The propeptide occupies 112–153 (GALAPRDLYALTLRGRGIQLNEDLPLSASTLRPDGIFQLGGG). Ser170 is modified (phosphoserine; by host).

Belongs to the adenoviridae hexon-linking protein family. Interacts with the peripentonal hexons as well as the hexons in the facets. Part of a complex composed of the core-capsid bridging protein, the endosome lysis protein VI and the hexon-linking protein VIII; these interactions bridge the virus core to the capsid. Cleaved by the viral protease during virion maturation. May cause the middle segment to be shed from the capsid.

It localises to the virion. It is found in the host nucleus. Structural component of the virion that acts as a cement protein on the capsid interior and which glue the peripentonal hexons and group-of-nine hexons together. The sequence is that of Pre-hexon-linking protein VIII from Porcine adenovirus A serotype 3 (PAdV-3).